Here is a 42-residue protein sequence, read N- to C-terminus: Phospholipase A1 (42 aa).

The protein belongs to the AB hydrolase superfamily. Lipase family. Contains six disulfide bonds. Expressed by the venom gland.

It localises to the secreted. It catalyses the reaction a 1,2-diacyl-sn-glycero-3-phosphocholine + H2O = a 2-acyl-sn-glycero-3-phosphocholine + a fatty acid + H(+). In terms of biological role, catalyzes the hydrolysis of phosphatidylcholine with phospholipase A1 activity. May act as an allergen and induce hemolytic activity. The sequence is that of Phospholipase A1 from Polistes gallicus (Paper wasp).